We begin with the raw amino-acid sequence, 275 residues long: Phosphonoacetaldehyde hydrolase (275 aa).

The Nucleophile role is filled by D15. Mg(2+)-binding residues include D15 and A17. Catalysis depends on K56, which acts as the Schiff-base intermediate with substrate. Mg(2+) is bound at residue D189.

This sequence belongs to the HAD-like hydrolase superfamily. PhnX family. Homodimer. Mg(2+) serves as cofactor.

It carries out the reaction phosphonoacetaldehyde + H2O = acetaldehyde + phosphate + H(+). Its function is as follows. Involved in phosphonate degradation. The polypeptide is Phosphonoacetaldehyde hydrolase (Pseudomonas paraeruginosa (strain DSM 24068 / PA7) (Pseudomonas aeruginosa (strain PA7))).